We begin with the raw amino-acid sequence, 213 residues long: GTP cyclohydrolase 1 (213 aa).

Zn(2+) contacts are provided by Cys-104, His-107, and Cys-175.

It belongs to the GTP cyclohydrolase I family. In terms of assembly, homomer.

It catalyses the reaction GTP + H2O = 7,8-dihydroneopterin 3'-triphosphate + formate + H(+). It participates in cofactor biosynthesis; 7,8-dihydroneopterin triphosphate biosynthesis; 7,8-dihydroneopterin triphosphate from GTP: step 1/1. The chain is GTP cyclohydrolase 1 from Brucella suis (strain ATCC 23445 / NCTC 10510).